A 356-amino-acid polypeptide reads, in one-letter code: Histidinol-phosphate aminotransferase (356 aa).

K214 is subject to N6-(pyridoxal phosphate)lysine.

Belongs to the class-II pyridoxal-phosphate-dependent aminotransferase family. Histidinol-phosphate aminotransferase subfamily. Homodimer. Requires pyridoxal 5'-phosphate as cofactor.

It carries out the reaction L-histidinol phosphate + 2-oxoglutarate = 3-(imidazol-4-yl)-2-oxopropyl phosphate + L-glutamate. Its pathway is amino-acid biosynthesis; L-histidine biosynthesis; L-histidine from 5-phospho-alpha-D-ribose 1-diphosphate: step 7/9. This is Histidinol-phosphate aminotransferase from Shigella sonnei (strain Ss046).